The sequence spans 295 residues: Phosphoribosylaminoimidazole-succinocarboxamide synthase (295 aa).

It belongs to the SAICAR synthetase family.

The catalysed reaction is 5-amino-1-(5-phospho-D-ribosyl)imidazole-4-carboxylate + L-aspartate + ATP = (2S)-2-[5-amino-1-(5-phospho-beta-D-ribosyl)imidazole-4-carboxamido]succinate + ADP + phosphate + 2 H(+). It participates in purine metabolism; IMP biosynthesis via de novo pathway; 5-amino-1-(5-phospho-D-ribosyl)imidazole-4-carboxamide from 5-amino-1-(5-phospho-D-ribosyl)imidazole-4-carboxylate: step 1/2. This chain is Phosphoribosylaminoimidazole-succinocarboxamide synthase, found in Halorhodospira halophila (strain DSM 244 / SL1) (Ectothiorhodospira halophila (strain DSM 244 / SL1)).